The following is a 97-amino-acid chain: C-C motif chemokine 8 (97 aa).

The signal sequence occupies residues 1–23 (MKIYAVLLCLLLIAVPVSPEKLT). Disulfide bonds link Cys32/Cys57 and Cys33/Cys73.

Belongs to the intercrine beta (chemokine CC) family. Monomer or homodimer; in equilibrium.

It is found in the secreted. Chemotactic factor that attracts monocytes. This protein can bind heparin. The sequence is that of C-C motif chemokine 8 (Ccl8) from Mus musculus (Mouse).